A 655-amino-acid chain; its full sequence is tRNA-guanine(15) transglycosylase (655 aa).

The active-site Nucleophile is D89. Residues D124 and A195 each coordinate substrate. Zn(2+) is bound by residues C281, C283, and C286. In terms of domain architecture, PUA spans 577–652; that stretch reads KYRVVVNKEA…LAVKVRGGLK (76 aa).

This sequence belongs to the archaeosine tRNA-ribosyltransferase family. It depends on Zn(2+) as a cofactor.

The enzyme catalyses guanosine(15) in tRNA + 7-cyano-7-deazaguanine = 7-cyano-7-carbaguanosine(15) in tRNA + guanine. It functions in the pathway tRNA modification; archaeosine-tRNA biosynthesis. Exchanges the guanine residue with 7-cyano-7-deazaguanine (preQ0) at position 15 in the dihydrouridine loop (D-loop) of archaeal tRNAs. Can also utilize guanine as substrate. The chain is tRNA-guanine(15) transglycosylase from Methanocaldococcus jannaschii (strain ATCC 43067 / DSM 2661 / JAL-1 / JCM 10045 / NBRC 100440) (Methanococcus jannaschii).